Here is a 234-residue protein sequence, read N- to C-terminus: AA9 family lytic polysaccharide monooxygenase D (234 aa).

The signal sequence occupies residues 1 to 18; the sequence is MRIEKLLNAALLAGAVSA. Cu(2+)-binding residues include His-19 and His-95. Cys-57 and Cys-182 are joined by a disulfide. His-168 and Gln-177 together coordinate O2. Residue Tyr-179 coordinates Cu(2+).

The protein belongs to the polysaccharide monooxygenase AA9 family. The cofactor is Cu(2+).

It localises to the secreted. It carries out the reaction [(1-&gt;4)-beta-D-glucosyl]n+m + reduced acceptor + O2 = 4-dehydro-beta-D-glucosyl-[(1-&gt;4)-beta-D-glucosyl]n-1 + [(1-&gt;4)-beta-D-glucosyl]m + acceptor + H2O.. Its function is as follows. Lytic polysaccharide monooxygenase (LPMO) that depolymerizes crystalline and amorphous polysaccharides via the oxidation of scissile alpha- or beta-(1-4)-glycosidic bonds, yielding C1 or C4 oxidation products. Catalysis by LPMOs requires the reduction of the active-site copper from Cu(II) to Cu(I) by a reducing agent and H(2)O(2) or O(2) as a cosubstrate. This is AA9 family lytic polysaccharide monooxygenase D from Malbranchea cinnamomea (Thermophilic fungus).